A 129-amino-acid polypeptide reads, in one-letter code: Small ribosomal subunit protein uS11 (129 aa).

The protein belongs to the universal ribosomal protein uS11 family. Part of the 30S ribosomal subunit. Interacts with proteins S7 and S18. Binds to IF-3.

Located on the platform of the 30S subunit, it bridges several disparate RNA helices of the 16S rRNA. Forms part of the Shine-Dalgarno cleft in the 70S ribosome. This chain is Small ribosomal subunit protein uS11, found in Mycoplasma mycoides subsp. mycoides SC (strain CCUG 32753 / NCTC 10114 / PG1).